A 225-amino-acid polypeptide reads, in one-letter code: tRNA (guanine-N(1)-)-methyltransferase (225 aa).

Residues Gly112 and 132-137 (IGDYVL) contribute to the S-adenosyl-L-methionine site.

Belongs to the RNA methyltransferase TrmD family. Homodimer.

The protein resides in the cytoplasm. The enzyme catalyses guanosine(37) in tRNA + S-adenosyl-L-methionine = N(1)-methylguanosine(37) in tRNA + S-adenosyl-L-homocysteine + H(+). In terms of biological role, specifically methylates guanosine-37 in various tRNAs. The protein is tRNA (guanine-N(1)-)-methyltransferase of Porphyromonas gingivalis (strain ATCC BAA-308 / W83).